A 407-amino-acid chain; its full sequence is 1-deoxy-D-xylulose 5-phosphate reductoisomerase (407 aa).

Positions 25, 26, 27, 28, 53, and 136 each coordinate NADPH. Lys137 serves as a coordination point for 1-deoxy-D-xylulose 5-phosphate. Glu138 serves as a coordination point for NADPH. Asp162 contacts Mn(2+). 1-deoxy-D-xylulose 5-phosphate contacts are provided by Ser163, Glu164, Ser188, and His211. Glu164 contacts Mn(2+). Residue Gly217 coordinates NADPH. Ser224, Asn229, Lys230, and Glu233 together coordinate 1-deoxy-D-xylulose 5-phosphate. Mn(2+) is bound at residue Glu233.

This sequence belongs to the DXR family. Requires Mg(2+) as cofactor. It depends on Mn(2+) as a cofactor.

It carries out the reaction 2-C-methyl-D-erythritol 4-phosphate + NADP(+) = 1-deoxy-D-xylulose 5-phosphate + NADPH + H(+). Its pathway is isoprenoid biosynthesis; isopentenyl diphosphate biosynthesis via DXP pathway; isopentenyl diphosphate from 1-deoxy-D-xylulose 5-phosphate: step 1/6. In terms of biological role, catalyzes the NADPH-dependent rearrangement and reduction of 1-deoxy-D-xylulose-5-phosphate (DXP) to 2-C-methyl-D-erythritol 4-phosphate (MEP). This Rhodopseudomonas palustris (strain HaA2) protein is 1-deoxy-D-xylulose 5-phosphate reductoisomerase.